Reading from the N-terminus, the 361-residue chain is MARVCVMMMAMAIAMAMNIAMGDPIAPCYFIFGDSLVDSGNNNRLTSLARANYFPYGIDFQYGPTGRFSNGKTTVDVITELLGFDDYITPYSEARGEDILRGVNYASAAAGIREETGRQLGARITFAGQVANHVNTVSQVVNILGDENEAANYLSKCIYSIGLGSNDYLNNYFMPVYYSTGSQYSPDAYANDLINRYTEQLRIMYNNGARKFALVGIGAIGCSPNELAQNSRDGVTCDERINSANRIFNSKLVSLVDHFNQNTPGAKFTYINAYGIFQDMVANPSRYGFRVTNAGCCGVGRNNGQITCLPGQAPCLNRDEYVFWDAFHPGEAANVVIGSRSFQRESASDAHPYDIQQLARL.

The first 22 residues, 1–22 (MARVCVMMMAMAIAMAMNIAMG), serve as a signal peptide directing secretion. Catalysis depends on Ser-35, which acts as the Nucleophile. Active-site residues include Asp-325 and His-328.

This sequence belongs to the 'GDSL' lipolytic enzyme family.

It is found in the secreted. This chain is GDSL esterase/lipase At4g18970, found in Arabidopsis thaliana (Mouse-ear cress).